The chain runs to 1597 residues: THO complex subunit 2 (1597 aa).

2 disordered regions span residues 1250 to 1274 (KSQR…SKDR) and 1384 to 1597 (EPYP…RYQR). Residues 1419 to 1430 (GSSNYRGPSNDR) show a composition bias toward polar residues. Composition is skewed to basic and acidic residues over residues 1458–1490 (TYND…EYKK), 1500–1512 (FPEK…KDSS), 1522–1545 (YKRD…ETIR), and 1554–1567 (RNTR…RANE). Positions 1568–1582 (NQRYNGNRKSNTQAL) are enriched in polar residues.

This sequence belongs to the THOC2 family. As to quaternary structure, component of the THO complex, which is composed of HPR1, MFT1, THO2 and THP2. Together with SUB2, TEX1 and YRA1, THO forms the transcription/export (TREX) complex. THO associates with DNA and RNA in vitro.

Its subcellular location is the nucleus. Component the THO subcomplex of the TREX complex, which operates in coupling transcription elongation to mRNA export. The THO complex is recruited to transcribed genes and moves along the gene with the elongating polymerase during transcription. THO is important for stabilizing nascent RNA in the RNA polymerase II elongation complex by preventing formation of DNA:RNA hybrids behind the elongating polymerase. It functions in cotranscriptional formation of an export-competent messenger ribonucleoprotein particle (mRNP) by facilitating the loading of ATP-dependent RNA helicase SUB2 and the mRNA export factor YRA1 along the nascent mRNA. The sequence is that of THO complex subunit 2 (THO2) from Saccharomyces cerevisiae (strain ATCC 204508 / S288c) (Baker's yeast).